The chain runs to 1297 residues: MKLKKQIRFYNKAMSRTALNELIRRLIDRFGMMCTSHILDQLKTLGFHQATDASFSLGIDDLLAAPSKWWLVKEEDQQGFFSEKQNLSGNLHTVETLRQLMERWHTTSEYLKEEMYPKFQLTNSFNPVYMMSFSGARGNKSQVHQLLGIRGLMSDPQGKIVDLPIQGNFQEGLSLTEYIISSYGARKGVVDTAVRTADAGYLTRRLVEVVQHIIVRKTDCGTTQGIFISPIQDRDRSKENVFLQKITGRVLADDVYINRRCIATRNQDISAGLANQFKNLLIQAISIRTPFTCKSLSWICQLCYGRSLSHNNLIELGEAVGIIAGQSIGEPGTQLTLRTFHTGGVFTGNIVGTIRAPFNGRIQFNSNLVYSTRTFFGHPAFICRKKLFIIIDDGGDKVDYSLLPTKSWVFVQNHQYVESEQLIGEFRTTTSLLKEKVLKYIYSELNGEMHWSTFVCHALKHTQGNAHFTFGAVHLWILSGGIYNPKVVLSFPFPKDQDQVTIAFLSTKQKNCFDPSVNLLQSNSVSFQNPKLEEEKLEEEKLEEEPDQSSISVPIFLENFNIQGKKQINRVLVPFFYAPKRKTKRKKRKNYPNCILKIPRSGFLHRNTTFCIWNDSQYKSPSPGFLEYSDSPEKFVLIPEEVHFFEKSSPIAIQNKSIIRADTQITAKKKSQVGGLVQIHKKKTKLVVKILPGYIDFYRKKNKKYWYKTFVSPRQNLGEDFLSEKNYFQTLNKPHRKKSFVLLRTAVEYKIPNPKEIKVPFCPDLLREEDNLHIQMSNCFYGDGGKKLQKGIQLIQTCLIFNWEQIDSTESETSISITSIRIKNIVINTIQFSLRKHSDSAWSQKKNQISSKRTFPPVLDKTQSFSLSGKIQLPSNYTATFRSLNNEKNMFLILSTSDCFRIHLFQTKKNDNIQNKSNPNKPINNHFVGFFGHLHSIENLYPSSHFLNYNKILFNKFCYNFNIFEIPNCYILDEFQKVLIYPRINHLWNPKKMRYRRYSKNRYPTMNLGQLLWENFAICKNESFSESGQIIAVREESLVVRLAKPYLATPKATIHGNFAEIINQGDPLITFFYERFKSSDITQGLPKVEQLAEAQSNNPVVQNIEENFRIWNQDMTRTFGSFWGLFISTKITMEQGRIHFVDQIQKVYQSQGVHICEKHIELIIRQMTSRVLVSDDVIFNVFLPGELIGLSRAQRIDRAFDEAIHYKTKLLGITKASFDTPSFISEASFQETARVLAKAAIQGRIDWLKGLKENVILSNIIPAGTGKKTNYSLFARRRRRKQNTKTRKNNLFSLNEK.

Positions 220, 293, 300, and 303 each coordinate Zn(2+). Over residues 1278–1288 (RRRKQNTKTRK) the composition is skewed to basic residues. Positions 1278 to 1297 (RRRKQNTKTRKNNLFSLNEK) are disordered.

It belongs to the RNA polymerase beta' chain family. RpoC2 subfamily. In terms of assembly, in plastids the minimal PEP RNA polymerase catalytic core is composed of four subunits: alpha, beta, beta', and beta''. When a (nuclear-encoded) sigma factor is associated with the core the holoenzyme is formed, which can initiate transcription. It depends on Zn(2+) as a cofactor.

Its subcellular location is the plastid. The protein localises to the chloroplast. The enzyme catalyses RNA(n) + a ribonucleoside 5'-triphosphate = RNA(n+1) + diphosphate. In terms of biological role, DNA-dependent RNA polymerase catalyzes the transcription of DNA into RNA using the four ribonucleoside triphosphates as substrates. The protein is DNA-directed RNA polymerase subunit beta'' of Welwitschia mirabilis (Tree tumbo).